Reading from the N-terminus, the 154-residue chain is Ribosomal RNA large subunit methyltransferase H (154 aa).

Residues Leu70 and Gly102 each contribute to the S-adenosyl-L-methionine site.

This sequence belongs to the RNA methyltransferase RlmH family. As to quaternary structure, homodimer.

The protein localises to the cytoplasm. The catalysed reaction is pseudouridine(1915) in 23S rRNA + S-adenosyl-L-methionine = N(3)-methylpseudouridine(1915) in 23S rRNA + S-adenosyl-L-homocysteine + H(+). In terms of biological role, specifically methylates the pseudouridine at position 1915 (m3Psi1915) in 23S rRNA. The protein is Ribosomal RNA large subunit methyltransferase H of Hyphomonas neptunium (strain ATCC 15444).